Reading from the N-terminus, the 515-residue chain is MAARAGFQSVAPSGGAGASGGAGAAAALGPGGTPGPPVRMGPAPGQGLYRSPMPGAAYPRPGMLPGSRMTPQGPSMGPPGYGGNPSVRPGLAQSGMDQSLKRPAPQQIKQVQQQAVQNRNHNAKKKKMADKILPQRIRELVPESQDYMDLLAFERKLDQTIMRKRLDIQEALKRPIKQKRKLRIFISNTFNPAKSDAEDGEGTVASWELRVEGRLLEDSALSKYDATKQKRKFSSFFKSLVIELDKDLYGPDNHLVEWHRTATTQETDGFQVKRPGDVNVRCTVLLMLDYQPPQFKLDPRLARLLGIHTQTRPVIIQALWQYIKTHKLQDPHEREFVICDKYLQQIFESQRMKFSEIPQRLHALLMPPEPIIINHVISVDPNDQKKTACYDIDEEVDDTLKTQMNSFLLSTASQQEIATLDNKIHETIETINQLKTQREFMLSFARDPQGFINDWLQSQCRDLKVMTDVVGNSEEERRAEFYFQPWAQEAVCRYFYSKVQQRRQELEQALGIRNT.

A disordered region spans residues 1–128 (MAARAGFQSV…RNHNAKKKKM (128 aa)). Residues 14–23 (GGAGASGGAG) show a composition bias toward gly residues. An interaction with ESR1, NR1H4, NR3C1, PGR and SMARCA4 region spans residues 43–167 (APGQGLYRSP…DQTIMRKRLD (125 aa)). An asymmetric dimethylarginine mark is found at arginine 68 and arginine 88. Residue lysine 101 forms a Glycyl lysine isopeptide (Lys-Gly) (interchain with G-Cter in SUMO2) linkage. Over residues 103–117 (PAPQQIKQVQQQAVQ) the composition is skewed to low complexity. The interval 168–474 (IQEALKRPIK…VMTDVVGNSE (307 aa)) is interaction with SMARCC1 and SMARCC2. The tract at residues 180-515 (RKLRIFISNT…LEQALGIRNT (336 aa)) is necessary for GR/NR3C1-mediated remodeling and transcription from chromatin; required for GR/NR3C1 interaction with the BRG1/SMARCA4 complex in vivo. Position 203 is a phosphothreonine (threonine 203). N6-acetyllysine is present on lysine 223. In terms of domain architecture, SWIB/MDM2 spans 290–367 (YQPPQFKLDP…PQRLHALLMP (78 aa)). The stretch at 412 to 440 (ASQQEIATLDNKIHETIETINQLKTQREF) forms a coiled coil.

This sequence belongs to the SMARCD family. Component of the multiprotein chromatin-remodeling complexes SWI/SNF: SWI/SNF-A (BAF), SWI/SNF-B (PBAF) and related complexes. The canonical complex contains a catalytic subunit (either SMARCA4/BRG1/BAF190A or SMARCA2/BRM/BAF190B), and at least SMARCE1, ACTL6A/BAF53, SMARCC1/BAF155, SMARCC2/BAF170, and SMARCB1/SNF5/BAF47. Other subunits specific to each of the complexes may also be present permitting several possible combinations developmentally and tissue specific. Component of the BAF complex, which includes at least actin (ACTB), ARID1A/BAF250A, ARID1B/BAF250B, SMARCA2/BRM, SMARCA4/BRG1/BAF190A, ACTL6A/BAF53, ACTL6B/BAF53B, SMARCE1/BAF57, SMARCC1/BAF155, SMARCC2/BAF170, SMARCB1/SNF5/INI1, and one or more SMARCD1/BAF60A, SMARCD2/BAF60B, or SMARCD3/BAF60C. In muscle cells, the BAF complex also contains DPF3. Component of neural progenitors-specific chromatin remodeling complex (npBAF complex) composed of at least, ARID1A/BAF250A or ARID1B/BAF250B, SMARCD1/BAF60A, SMARCD3/BAF60C, SMARCA2/BRM/BAF190B, SMARCA4/BRG1/BAF190A, SMARCB1/BAF47, SMARCC1/BAF155, SMARCE1/BAF57, SMARCC2/BAF170, PHF10/BAF45A, ACTL6A/BAF53A and actin. Component of neuron-specific chromatin remodeling complex (nBAF complex) composed of at least, ARID1A/BAF250A or ARID1B/BAF250B, SMARCD1/BAF60A, SMARCD3/BAF60C, SMARCA2/BRM/BAF190B, SMARCA4/BRG1/BAF190A, SMARCB1/BAF47, SMARCC1/BAF155, SMARCE1/BAF57, SMARCC2/BAF170, DPF1/BAF45B, DPF3/BAF45C, ACTL6B/BAF53B and actin. Component of the SWI/SNF-B (PBAF) chromatin remodeling complex, at least composed of SMARCA4/BRG1, SMARCB1/BAF47/SNF5, ACTL6A/BAF53A or ACTL6B/BAF53B, SMARCE1/BAF57, SMARCD1/BAF60A, SMARCD2/BAF60B, perhaps SMARCD3/BAF60C, SMARCC1/BAF155, SMARCC2/BAF170, PBRM1/BAF180, ARID2/BAF200 and actin (ACTB). Component of SWI/SNF (GBAF) subcomplex, which includes at least BICRA or BICRAL (mutually exclusive), BRD9, SS18, SMARCA2/BRM, SMARCA4/BRG1/BAF190A, ACTL6A/BAF53, SMARCC1/BAF155, and SMARCD1/BAF60A. Specifically interacts with the VDR heterodimer complex. Interacts with ESR1, NR3C1, NR1H4, PGR, SMARCA4, SMARCC1 and SMARCC2. Interacts with DPF2. Interacts with FOS, FOSB, FOSL1 and FOSL2.

The protein resides in the nucleus. In terms of biological role, involved in transcriptional activation and repression of select genes by chromatin remodeling (alteration of DNA-nucleosome topology). Component of SWI/SNF chromatin remodeling complexes that carry out key enzymatic activities, changing chromatin structure by altering DNA-histone contacts within a nucleosome in an ATP-dependent manner. Belongs to the neural progenitors-specific chromatin remodeling complex (npBAF complex) and the neuron-specific chromatin remodeling complex (nBAF complex). During neural development a switch from a stem/progenitor to a postmitotic chromatin remodeling mechanism occurs as neurons exit the cell cycle and become committed to their adult state. The transition from proliferating neural stem/progenitor cells to postmitotic neurons requires a switch in subunit composition of the npBAF and nBAF complexes. As neural progenitors exit mitosis and differentiate into neurons, npBAF complexes which contain ACTL6A/BAF53A and PHF10/BAF45A, are exchanged for homologous alternative ACTL6B/BAF53B and DPF1/BAF45B or DPF3/BAF45C subunits in neuron-specific complexes (nBAF). The npBAF complex is essential for the self-renewal/proliferative capacity of the multipotent neural stem cells. The nBAF complex along with CREST plays a role regulating the activity of genes essential for dendrite growth. Has a strong influence on vitamin D-mediated transcriptional activity from an enhancer vitamin D receptor element (VDRE). May be a link between mammalian SWI-SNF-like chromatin remodeling complexes and the vitamin D receptor (VDR) heterodimer. Mediates critical interactions between nuclear receptors and the BRG1/SMARCA4 chromatin-remodeling complex for transactivation. Interacts with AKIRIN2. The chain is SWI/SNF-related matrix-associated actin-dependent regulator of chromatin subfamily D member 1 (SMARCD1) from Bos taurus (Bovine).